The following is a 5255-amino-acid chain: SCO-spondin (5255 aa).

A signal peptide spans 1–18 (MGIVATVLLWVVTEAARG). The region spanning 19-111 (RWCERTEQVT…ACCAGWSGPH (93 aa)) is the EMI domain. N-linked (GlcNAc...) asparagine glycans are attached at residues asparagine 97, asparagine 136, asparagine 156, and asparagine 255. Positions 192 to 358 (ASCTVWAGSR…PDANPELSCS (167 aa)) constitute a VWFD 1 domain. 2 disulfides stabilise this stretch: cysteine 194/cysteine 317 and cysteine 216/cysteine 357. The TIL 1 domain occupies 453–508 (CGHGQRYSDCVSSCPASCMAAGTAEEGHCRDDCASGCECTPGLLLDRGACIPQSAC). Positions 508-601 (CPCLHRGHIY…CGGHQPLSCL (94 aa)) constitute a VWFC 1 domain. A VWFD 2 domain is found at 546–717 (AECAVLGDLH…NKYRVSTDCP (172 aa)). Disulfide bonds link cysteine 548-cysteine 681, cysteine 570-cysteine 716, and cysteine 592-cysteine 600. N-linked (GlcNAc...) asparagine glycosylation occurs at asparagine 801. The TIL 2 domain maps to 809–868 (CRGGQVYQECSSPCGRTCADLRLDGASSCPSLDNICVSGCNCPEGPVLDDGGQCVPPGVC). One can recognise a VWFC 2 domain in the interval 868 to 926 (CPCQHSSQLYPAGSKIRQGCNACMCTAGTWSCTDAPCPDAAFCPGDLVYVFGSCLRTCD). N-linked (GlcNAc...) asparagine glycans are attached at residues asparagine 931 and asparagine 972. A VWFD 3 domain is found at 998–1168 (GTCVATGDPH…NSWRVSLLCP (171 aa)). 3 cysteine pairs are disulfide-bonded: cysteine 1000–cysteine 1132, cysteine 1022–cysteine 1167, and cysteine 1043–cysteine 1050. In terms of domain architecture, TIL 3 spans 1263 to 1319 (CDGGQEYSACGPPCPQTCRNLGLELPEHCDTMSCLEGCFCPEGKVLHEGSCIDPAEC). Asparagine 1340 carries an N-linked (GlcNAc...) asparagine glycan. 6 consecutive LDL-receptor class A domains span residues 1362–1398 (HCPD…EVCA), 1400–1436 (HCAP…RGCP), 1439–1477 (PCAP…AGCS), 1479–1515 (SCSV…RGCV), 1515–1551 (VCPA…AFCP), and 1555–1593 (TCAP…VRCM). 18 disulfide bridges follow: cysteine 1363-cysteine 1376, cysteine 1370-cysteine 1389, cysteine 1383-cysteine 1397, cysteine 1401-cysteine 1413, cysteine 1408-cysteine 1426, cysteine 1420-cysteine 1435, cysteine 1440-cysteine 1452, cysteine 1447-cysteine 1465, cysteine 1459-cysteine 1476, cysteine 1480-cysteine 1492, cysteine 1487-cysteine 1505, cysteine 1499-cysteine 1514, cysteine 1516-cysteine 1528, cysteine 1523-cysteine 1541, cysteine 1535-cysteine 1550, cysteine 1556-cysteine 1568, cysteine 1563-cysteine 1581, and cysteine 1575-cysteine 1592. N-linked (GlcNAc...) asparagine glycosylation occurs at asparagine 1610. LDL-receptor class A domains are found at residues 1616–1652 (VCGP…LGCN), 1654–1693 (SCVL…DNCG), and 1699–1734 (PCPG…LACE). 3 cysteine pairs are disulfide-bonded: cysteine 1617/cysteine 1629, cysteine 1624/cysteine 1642, and cysteine 1636/cysteine 1651. Residue asparagine 1652 is glycosylated (N-linked (GlcNAc...) asparagine). Cystine bridges form between cysteine 1655–cysteine 1668, cysteine 1662–cysteine 1681, cysteine 1675–cysteine 1692, cysteine 1700–cysteine 1711, cysteine 1706–cysteine 1724, and cysteine 1718–cysteine 1733. Residue asparagine 1713 is glycosylated (N-linked (GlcNAc...) asparagine). N-linked (GlcNAc...) asparagine glycosylation is present at asparagine 1743. Positions 1748–1790 (PCAEYSCRDGDCITFKQVCNGLPDCRDGDMASGWLPSDEWDCG) constitute an LDL-receptor class A 10 domain. 6 disulfide bridges follow: cysteine 1749/cysteine 1759, cysteine 1754/cysteine 1772, cysteine 1766/cysteine 1789, cysteine 1801/cysteine 1837, cysteine 1805/cysteine 1842, and cysteine 1816/cysteine 1827. 2 consecutive TSP type-1 domains span residues 1789–1843 (CGQW…TACP) and 1845–1903 (DGAW…DGCP). Asparagine 1856 carries N-linked (GlcNAc...) asparagine glycosylation. 3 disulfide bridges follow: cysteine 1857-cysteine 1897, cysteine 1861-cysteine 1902, and cysteine 1871-cysteine 1881. The 55-residue stretch at 1907–1961 (CPGGLQPRPCAPCPASCADLASRAPCRREQCTPGCWCAEGLVLDGERGCVRPREC) folds into the TIL 4 domain. 2 EGF-like domains span residues 1919 to 1956 (CPAS…RGCV) and 1957 to 1983 (RPRE…CRLC). The region spanning 1961–2019 (CRCEVDGLRYWPGQRMKLNCRLCTCLDGQPRRCRHNPACSVSCSWSAWSPWGECLGPCG) is the VWFC 3 domain. The 57-residue stretch at 2002–2058 (SCSWSAWSPWGECLGPCGVQSIQWSFRSPSHPGKHGTNRQCRGIYRKARRCQTEPCQ) folds into the TSP type-1 3 domain. Cystine bridges form between cysteine 2003-cysteine 2042, cysteine 2014-cysteine 2018, and cysteine 2052-cysteine 2057. One can recognise a VWFC 4 domain in the interval 2058–2120 (QECEHQGRSR…GKGDSCCFCA (63 aa)). 2 N-linked (GlcNAc...) asparagine glycosylation sites follow: asparagine 2125 and asparagine 2230. 4 cysteine pairs are disulfide-bonded: cysteine 2162-cysteine 2310, cysteine 2328-cysteine 2339, cysteine 2335-cysteine 2352, and cysteine 2346-cysteine 2361. Residues 2162 to 2310 (CYSPLGIASL…IFLRAELLGC (149 aa)) form the F5/8 type C domain. Positions 2327-2362 (PCGTGEFWCGVSCVTASRRCDGATDCPGGADEAGCE) constitute an LDL-receptor class A 11 domain. Positions 2352-2373 (CPGGADEAGCEPPSSTTLPTHP) are disordered. The span at 2364 to 2373 (PSSTTLPTHP) shows a compositional bias: polar residues. 2 LDL-receptor class A domains span residues 2481–2517 (LCPP…AHCG) and 2538–2574 (TCSP…SSCA). Disulfide bonds link cysteine 2482–cysteine 2494, cysteine 2489–cysteine 2507, cysteine 2501–cysteine 2516, cysteine 2539–cysteine 2551, cysteine 2546–cysteine 2564, cysteine 2558–cysteine 2573, cysteine 2576–cysteine 2612, cysteine 2587–cysteine 2591, cysteine 2622–cysteine 2627, cysteine 2642–cysteine 2679, cysteine 2646–cysteine 2684, and cysteine 2657–cysteine 2669. TSP type-1 domains lie at 2575-2628 (DCIL…RACP) and 2630-2685 (PGAW…QPCG). In terms of domain architecture, TIL 5 spans 2708-2750 (PPCPQVCGDLSATSSCQSPCQEGCRCPPGLFLQEGTCVNASQC). N-linked (GlcNAc...) asparagine glycosylation occurs at asparagine 2746. 3 consecutive TSP type-1 domains span residues 2790 to 2844 (ACAW…TPCA), 2849 to 2903 (SSGW…APCP), and 2905 to 2958 (AGVW…RPCG). Disulfide bonds link cysteine 2791–cysteine 2829, cysteine 2802–cysteine 2806, cysteine 2839–cysteine 2843, cysteine 2861–cysteine 2897, cysteine 2865–cysteine 2902, cysteine 2881–cysteine 2887, cysteine 2917–cysteine 2952, cysteine 2921–cysteine 2957, and cysteine 2932–cysteine 2942. The 50-residue stretch at 2971–3020 (EECRHSEGRCPWICQDLGAGVACTAQCQPGCHCPAGLLLQNGTCVPPSHC) folds into the TIL 6 domain. Residues asparagine 3011, asparagine 3042, and asparagine 3065 are each glycosylated (N-linked (GlcNAc...) asparagine). In terms of domain architecture, VWFC 5 spans 3020 to 3077 (CLCHHRGHLYQPGDINALDTCNNCTCVTGQMVCSTETCPVPCTWSNWTAWSTCSHSCD). TSP type-1 domains lie at 3060 to 3115 (PCTW…QPCR) and 3117 to 3158 (VAPW…APCP). Disulfide bonds link cysteine 3061-cysteine 3099, cysteine 3072-cysteine 3076, and cysteine 3109-cysteine 3114. An N-linked (GlcNAc...) asparagine glycan is attached at asparagine 3136. One can recognise a TIL 7 domain in the interval 3165 to 3217 (CPPGKQWQACAQGAASCAELSAAPPADGSCHPGCYCPPGALLLNNECVAEAAC). Residues 3217–3275 (CPCAVDGVLYQPGDVVPQGCHNCSCIAGRVTNCSQEDCGDVDGPWTPWTPWSECSASCG) enclose the VWFC 6 domain. Residues asparagine 3238 and asparagine 3248 are each glycosylated (N-linked (GlcNAc...) asparagine). The TSP type-1 11 domain maps to 3258 to 3309 (DGPWTPWTPWSECSASCGPGRQRRYRFCSAHPGVPCAEPQPQERPCARQPCH). 3 cysteine pairs are disulfide-bonded: cysteine 3270–cysteine 3303, cysteine 3274–cysteine 3308, and cysteine 3285–cysteine 3293. Residues asparagine 3350, asparagine 3366, and asparagine 3392 are each glycosylated (N-linked (GlcNAc...) asparagine). TSP type-1 domains lie at 3410-3475 (PGAW…PPCP) and 3477-3532 (DGAW…SSCP). Disulfide bonds link cysteine 3422–cysteine 3468, cysteine 3426–cysteine 3474, cysteine 3437–cysteine 3449, cysteine 3489–cysteine 3524, cysteine 3492–cysteine 3531, and cysteine 3502–cysteine 3514. One can recognise a TIL 8 domain in the interval 3534 to 3589 (CAGGLVAFTCGKPCPHSCEDLREDTACMATPRCLPACACPHGQLLQDGDCVPPELC). N-linked (GlcNAc...) asparagine glycosylation is found at asparagine 3598 and asparagine 3625. 2 TSP type-1 domains span residues 3644–3700 (DGGW…EGCP) and 3702–3751 (EEPW…HVCR). Intrachain disulfides connect cysteine 3656-cysteine 3693, cysteine 3660-cysteine 3699, cysteine 3671-cysteine 3683, cysteine 3714-cysteine 3745, cysteine 3718-cysteine 3750, and cysteine 3729-cysteine 3735. Residues asparagine 3823 and asparagine 3869 are each glycosylated (N-linked (GlcNAc...) asparagine). 4 consecutive TSP type-1 domains span residues 3878 to 3934 (DGGF…PECP), 3951 to 4004 (EEGF…PLCS), 4018 to 4074 (NCSW…QACK), and 4076 to 4131 (DGAW…QPCD). Cystine bridges form between cysteine 3890/cysteine 3928, cysteine 3894/cysteine 3933, cysteine 3906/cysteine 3918, cysteine 3963/cysteine 3998, cysteine 3967/cysteine 4003, and cysteine 3982/cysteine 3988. The disordered stretch occupies residues 3932-3951 (ECPAVPTTEPGPGVAGAEEE). An N-linked (GlcNAc...) asparagine glycan is attached at asparagine 4018. Cystine bridges form between cysteine 4019/cysteine 4055, cysteine 4030/cysteine 4034, cysteine 4068/cysteine 4073, cysteine 4088/cysteine 4125, cysteine 4092/cysteine 4130, and cysteine 4103/cysteine 4115. A TIL 9 domain is found at 4134–4189 (CPPGMALVTCANHCPRHCGDLQEGIVCREEEHCEPGCRCPNGTLEQDGGCVPLAHC). N-linked (GlcNAc...) asparagine glycosylation is found at asparagine 4174 and asparagine 4211. 3 consecutive TSP type-1 domains span residues 4230-4282 (RCPW…GPCP), 4322-4384 (GAEH…RPCP), and 4386-4433 (ECSW…SGCS). 3 disulfide bridges follow: cysteine 4231–cysteine 4266, cysteine 4242–cysteine 4246, and cysteine 4276–cysteine 4281. An N-linked (GlcNAc...) asparagine glycan is attached at asparagine 4362. Intrachain disulfides connect cysteine 4387/cysteine 4417, cysteine 4398/cysteine 4400, and cysteine 4427/cysteine 4432. Asparagine 4428 carries an N-linked (GlcNAc...) asparagine glycan. Positions 4437-4492 (CEPPFEFQPCSPPCARLCSTLQHPELCPAQSHCLPGCFCPQGLLEQRSACVPPEQC) constitute a TIL 10 domain. Asparagine 4498 carries an N-linked (GlcNAc...) asparagine glycan. TSP type-1 domains are found at residues 4537–4608 (LPLS…DICQ) and 4610–4662 (LCLW…AVCP). Disulfide bonds link cysteine 4548–cysteine 4601, cysteine 4551–cysteine 4607, cysteine 4575–cysteine 4591, cysteine 4611–cysteine 4646, cysteine 4622–cysteine 4626, and cysteine 4656–cysteine 4661. Residues 4675 to 4722 (TTCANSCPRACADLWQHVECVQGGCKPGCRCPQGQLLQDGLCVPTAQC) enclose the TIL 11 domain. N-linked (GlcNAc...) asparagine glycosylation is found at asparagine 4730, asparagine 4747, and asparagine 4752. 2 TSP type-1 domains span residues 4762 to 4815 (CPSY…QPCP) and 4817 to 4869 (GCQL…HNCT). 6 disulfide bridges follow: cysteine 4774/cysteine 4809, cysteine 4778/cysteine 4814, cysteine 4789/cysteine 4798, cysteine 4818/cysteine 4852, cysteine 4829/cysteine 4833, and cysteine 4863/cysteine 4868. N-linked (GlcNAc...) asparagine glycosylation occurs at asparagine 4867. A TIL 12 domain is found at 4872 to 4926 (CPRSQVHRECANACPHACADLRPQTQCLPQPCQPGCACPPGQVLQDGACVPPEEC). Asparagine 4939 and asparagine 4970 each carry an N-linked (GlcNAc...) asparagine glycan. A TSP type-1 27 domain is found at 4979–5033 (DCLWSPWSPWSPCSVTCGMGERLSHRHPLRQRLYEGAECLGPPVRRAACHLPDCA). 3 disulfides stabilise this stretch: cysteine 4980/cysteine 5017, cysteine 4991/cysteine 4995, and cysteine 5027/cysteine 5032. Asparagine 5081, asparagine 5122, and asparagine 5169 each carry an N-linked (GlcNAc...) asparagine glycan. The VWFC 7 domain occupies 5092-5150 (CECLHQGQLHQPGSEWQEQCARCRCVDGKANCTDGCTPLSCPEGEVKVREPGRCCPVCR). Intrachain disulfides connect cysteine 5161/cysteine 5209, cysteine 5175/cysteine 5226, cysteine 5185/cysteine 5242, and cysteine 5189/cysteine 5244. The 88-residue stretch at 5161 to 5248 (CRRFTELRNI…IHSCECSSCQ (88 aa)) folds into the CTCK domain.

Belongs to the thrombospondin family.

The protein resides in the secreted. The protein localises to the extracellular space. Functionally, involved in the modulation of neuronal aggregation. May be involved in developmental events during the formation of the central nervous system. In Gallus gallus (Chicken), this protein is SCO-spondin (SSPO).